Reading from the N-terminus, the 141-residue chain is Small ribosomal subunit protein uS12 (141 aa).

This sequence belongs to the universal ribosomal protein uS12 family. In terms of assembly, part of the 30S ribosomal subunit.

Its function is as follows. With S4 and S5 plays an important role in translational accuracy. Located at the interface of the 30S and 50S subunits. The protein is Small ribosomal subunit protein uS12 of Methanosphaera stadtmanae (strain ATCC 43021 / DSM 3091 / JCM 11832 / MCB-3).